Here is a 161-residue protein sequence, read N- to C-terminus: Transcription initiation factor TFIID subunit 12 (161 aa).

The segment at 15 to 55 (FSSIKPEPASTPPQGSMANSTAVVKIPGTPGAGGRLSPENN) is disordered. Lys-19 participates in a covalent cross-link: Glycyl lysine isopeptide (Lys-Gly) (interchain with G-Cter in SUMO2). Residues 26–36 (PPQGSMANSTA) are compositionally biased toward polar residues. At Thr-43 the chain carries Phosphothreonine. The residue at position 51 (Ser-51) is a Phosphoserine. At Thr-59 the chain carries Phosphothreonine. Residues 59–126 (TKKKLQDLVR…QLHLERQWNM (68 aa)) form the Histone-fold domain.

Belongs to the TAF12 family. In terms of assembly, component of the TFIID basal transcription factor complex, composed of TATA-box-binding protein TBP, and a number of TBP-associated factors (TAFs), including TAF1, TAF2, TAF3, TAF4, TAF5, TAF6, TAF7, TAF8, TAF9, TAF10, TAF11, TAF12 and TAF13. Component of the TATA-binding protein-free TAF complex (TFTC), the PCAF histone acetylase complex and the STAGA transcription coactivator-HAT complex. Component of the PCAF complex, at least composed of TADA2L/ADA2, TADA3L/ADA3, TAF5L/PAF65-beta, SUPT3H, TAF6L, TAF9, TAF10, TAF12 and TRRAP. Component of the STAGA transcription coactivator-HAT complex, at least composed of SUPT3H, GCN5L2, TAF5L, TAF6L, STAF65-gamma/SUPT7L, TADA3L, TAD1L, TAF10, TAF12, TRRAP and TAF9. Interacts with ATF7 (via the transactivation domain); the interaction is prevented by sumoylation of ATF7. As to quaternary structure, interacts with TBP; the interaction is direct. Interacts with TAF10; the interaction is direct. Interacts with ATF7, promoting transactivation by ATF7. Does not promote the transactivation of ATF7. In terms of tissue distribution, ubiquitous.

The protein resides in the nucleus. Functionally, the TFIID basal transcription factor complex plays a major role in the initiation of RNA polymerase II (Pol II)-dependent transcription. TFIID recognizes and binds promoters with or without a TATA box via its subunit TBP, a TATA-box-binding protein, and promotes assembly of the pre-initiation complex (PIC). The TFIID complex consists of TBP and TBP-associated factors (TAFs), including TAF1, TAF2, TAF3, TAF4, TAF5, TAF6, TAF7, TAF8, TAF9, TAF10, TAF11, TAF12 and TAF13. Component of the TATA-binding protein-free TAF complex (TFTC), the PCAF histone acetylase complex and the STAGA transcription coactivator-HAT complex. The polypeptide is Transcription initiation factor TFIID subunit 12 (Homo sapiens (Human)).